Consider the following 207-residue polypeptide: ATP synthase subunit delta (207 aa).

This sequence belongs to the ATPase delta chain family. F-type ATPases have 2 components, F(1) - the catalytic core - and F(0) - the membrane proton channel. F(1) has five subunits: alpha(3), beta(3), gamma(1), delta(1), epsilon(1). F(0) has three main subunits: a(1), b(2) and c(10-14). The alpha and beta chains form an alternating ring which encloses part of the gamma chain. F(1) is attached to F(0) by a central stalk formed by the gamma and epsilon chains, while a peripheral stalk is formed by the delta and b chains.

The protein localises to the cell inner membrane. Its function is as follows. F(1)F(0) ATP synthase produces ATP from ADP in the presence of a proton or sodium gradient. F-type ATPases consist of two structural domains, F(1) containing the extramembraneous catalytic core and F(0) containing the membrane proton channel, linked together by a central stalk and a peripheral stalk. During catalysis, ATP synthesis in the catalytic domain of F(1) is coupled via a rotary mechanism of the central stalk subunits to proton translocation. This protein is part of the stalk that links CF(0) to CF(1). It either transmits conformational changes from CF(0) to CF(1) or is implicated in proton conduction. This chain is ATP synthase subunit delta, found in Psychrobacter cryohalolentis (strain ATCC BAA-1226 / DSM 17306 / VKM B-2378 / K5).